We begin with the raw amino-acid sequence, 164 residues long: UPF0114 protein YqhA (164 aa).

The next 3 helical transmembrane spans lie at Y10–L32, L53–F75, and L136–Y155.

The protein belongs to the UPF0114 family.

It localises to the cell membrane. In Salmonella typhi, this protein is UPF0114 protein YqhA.